Consider the following 886-residue polypeptide: Alanine--tRNA ligase (886 aa).

Positions 568, 572, 670, and 674 each coordinate Zn(2+).

This sequence belongs to the class-II aminoacyl-tRNA synthetase family. Zn(2+) serves as cofactor.

Its subcellular location is the cytoplasm. It catalyses the reaction tRNA(Ala) + L-alanine + ATP = L-alanyl-tRNA(Ala) + AMP + diphosphate. Its function is as follows. Catalyzes the attachment of alanine to tRNA(Ala) in a two-step reaction: alanine is first activated by ATP to form Ala-AMP and then transferred to the acceptor end of tRNA(Ala). Also edits incorrectly charged Ser-tRNA(Ala) and Gly-tRNA(Ala) via its editing domain. This Prochlorococcus marinus (strain NATL2A) protein is Alanine--tRNA ligase.